Here is a 382-residue protein sequence, read N- to C-terminus: S-adenosylmethionine synthase (382 aa).

His-16 contacts ATP. Asp-18 lines the Mg(2+) pocket. Position 44 (Glu-44) interacts with K(+). L-methionine is bound by residues Glu-57 and Gln-100. The flexible loop stretch occupies residues 100 to 110 (QSADIAMGVDE). ATP contacts are provided by residues 165-167 (DAK), Asp-240, 246-247 (RK), Ala-263, and Lys-267. Asp-240 contacts L-methionine. An L-methionine-binding site is contributed by Lys-271.

The protein belongs to the AdoMet synthase family. In terms of assembly, homotetramer; dimer of dimers. Mg(2+) is required as a cofactor. It depends on K(+) as a cofactor.

The protein localises to the cytoplasm. The enzyme catalyses L-methionine + ATP + H2O = S-adenosyl-L-methionine + phosphate + diphosphate. It participates in amino-acid biosynthesis; S-adenosyl-L-methionine biosynthesis; S-adenosyl-L-methionine from L-methionine: step 1/1. Functionally, catalyzes the formation of S-adenosylmethionine (AdoMet) from methionine and ATP. The overall synthetic reaction is composed of two sequential steps, AdoMet formation and the subsequent tripolyphosphate hydrolysis which occurs prior to release of AdoMet from the enzyme. This is S-adenosylmethionine synthase from Saccharophagus degradans (strain 2-40 / ATCC 43961 / DSM 17024).